We begin with the raw amino-acid sequence, 279 residues long: Putative potassium channel regulatory protein (279 aa).

Residues 5–74 (ELVTLNVGGM…VRTSQLSLPS (70 aa)) enclose the BTB domain. Positions 256–279 (ENSRQENYETETVQVKQAKPNKKR) are disordered.

It localises to the endoplasmic reticulum. Functionally, inhibits potassium fluxes in cells, possibly by retaining potassium channels in the cytoplasm. The chain is Putative potassium channel regulatory protein (kcnrg) from Xenopus tropicalis (Western clawed frog).